The chain runs to 201 residues: Myelomonocytic growth factor (201 aa).

Positions 1–23 (MCCLTPVLALALVLGAPWQALHG) are cleaved as a signal peptide. Intrachain disulfides connect Cys61–Cys67 and Cys89–Cys99. Residues Asn123 and Asn137 are each glycosylated (N-linked (GlcNAc...) asparagine).

This sequence belongs to the IL-6 superfamily.

It localises to the secreted. In terms of biological role, hematopoietic growth factor that stimulates the proliferation and colony formation of normal and transformed avian cells of the myeloid lineage. The protein is Myelomonocytic growth factor of Gallus gallus (Chicken).